A 382-amino-acid chain; its full sequence is Secreted triacylglycerol lipase LIP5 (382 aa).

Cysteine 40 and cysteine 211 are disulfide-bonded. A glycan (N-linked (GlcNAc...) asparagine) is linked at asparagine 115. Serine 124 (nucleophile) is an active-site residue. 2 N-linked (GlcNAc...) asparagine glycosylation sites follow: asparagine 157 and asparagine 232. Catalysis depends on residues aspartate 271 and histidine 305. The N-linked (GlcNAc...) asparagine glycan is linked to asparagine 346.

This sequence belongs to the AB hydrolase superfamily. Lipase family. Class Lip subfamily.

It is found in the secreted. It carries out the reaction a triacylglycerol + H2O = a diacylglycerol + a fatty acid + H(+). The catalysed reaction is a monoacylglycerol + H2O = glycerol + a fatty acid + H(+). The enzyme catalyses a diacylglycerol + H2O = a monoacylglycerol + a fatty acid + H(+). Functionally, secreted lipase that hydrolyzes acylglycerol lipids such as triacylglycerols and consequently releases free fatty acid. Can hydrolyze 4-nitrophenyl palmitate to release 4-nitrophenol and palmitoic acid. Due to an absence of fatty acid synthase genes in Malassezia species, secretory lipases are essential for the yeast to generate free fatty acids from degradation of sebum and assimilate them as lipid sources for growth. Plays important roles not only in lipid metabolism but also in the immune response of host cells and pathogenesis. The polypeptide is Secreted triacylglycerol lipase LIP5 (Malassezia furfur (Pityriasis versicolor infection agent)).